Reading from the N-terminus, the 100-residue chain is NADH-quinone oxidoreductase subunit K (100 aa).

The next 3 membrane-spanning stretches (helical) occupy residues 4–24 (LSWY…GFVI), 29–49 (IVML…FASF), and 60–80 (IFVL…LAIV).

It belongs to the complex I subunit 4L family. In terms of assembly, NDH-1 is composed of 14 different subunits. Subunits NuoA, H, J, K, L, M, N constitute the membrane sector of the complex.

Its subcellular location is the cell inner membrane. The enzyme catalyses a quinone + NADH + 5 H(+)(in) = a quinol + NAD(+) + 4 H(+)(out). Functionally, NDH-1 shuttles electrons from NADH, via FMN and iron-sulfur (Fe-S) centers, to quinones in the respiratory chain. The immediate electron acceptor for the enzyme in this species is believed to be ubiquinone. Couples the redox reaction to proton translocation (for every two electrons transferred, four hydrogen ions are translocated across the cytoplasmic membrane), and thus conserves the redox energy in a proton gradient. In Thermodesulfovibrio yellowstonii (strain ATCC 51303 / DSM 11347 / YP87), this protein is NADH-quinone oxidoreductase subunit K.